We begin with the raw amino-acid sequence, 496 residues long: Protein nucleotidyltransferase YdiU (496 aa).

Residues glycine 98, glycine 100, arginine 101, lysine 116, aspartate 128, glycine 129, arginine 179, and arginine 186 each contribute to the ATP site. Residue aspartate 259 is the Proton acceptor of the active site. Positions 260 and 269 each coordinate Mg(2+). Aspartate 269 provides a ligand contact to ATP.

This sequence belongs to the SELO family. Mg(2+) is required as a cofactor. The cofactor is Mn(2+).

The enzyme catalyses L-seryl-[protein] + ATP = 3-O-(5'-adenylyl)-L-seryl-[protein] + diphosphate. It carries out the reaction L-threonyl-[protein] + ATP = 3-O-(5'-adenylyl)-L-threonyl-[protein] + diphosphate. It catalyses the reaction L-tyrosyl-[protein] + ATP = O-(5'-adenylyl)-L-tyrosyl-[protein] + diphosphate. The catalysed reaction is L-histidyl-[protein] + UTP = N(tele)-(5'-uridylyl)-L-histidyl-[protein] + diphosphate. The enzyme catalyses L-seryl-[protein] + UTP = O-(5'-uridylyl)-L-seryl-[protein] + diphosphate. It carries out the reaction L-tyrosyl-[protein] + UTP = O-(5'-uridylyl)-L-tyrosyl-[protein] + diphosphate. Functionally, nucleotidyltransferase involved in the post-translational modification of proteins. It can catalyze the addition of adenosine monophosphate (AMP) or uridine monophosphate (UMP) to a protein, resulting in modifications known as AMPylation and UMPylation. In Albidiferax ferrireducens (strain ATCC BAA-621 / DSM 15236 / T118) (Rhodoferax ferrireducens), this protein is Protein nucleotidyltransferase YdiU.